We begin with the raw amino-acid sequence, 260 residues long: Thiazole synthase (260 aa).

K96 acts as the Schiff-base intermediate with DXP in catalysis. 1-deoxy-D-xylulose 5-phosphate contacts are provided by residues G157, 184–185 (AG), and 206–207 (NT).

It belongs to the ThiG family. In terms of assembly, homotetramer. Forms heterodimers with either ThiH or ThiS.

It is found in the cytoplasm. The catalysed reaction is [ThiS sulfur-carrier protein]-C-terminal-Gly-aminoethanethioate + 2-iminoacetate + 1-deoxy-D-xylulose 5-phosphate = [ThiS sulfur-carrier protein]-C-terminal Gly-Gly + 2-[(2R,5Z)-2-carboxy-4-methylthiazol-5(2H)-ylidene]ethyl phosphate + 2 H2O + H(+). It participates in cofactor biosynthesis; thiamine diphosphate biosynthesis. Catalyzes the rearrangement of 1-deoxy-D-xylulose 5-phosphate (DXP) to produce the thiazole phosphate moiety of thiamine. Sulfur is provided by the thiocarboxylate moiety of the carrier protein ThiS. In vitro, sulfur can be provided by H(2)S. The protein is Thiazole synthase of Rhodopseudomonas palustris (strain BisB5).